We begin with the raw amino-acid sequence, 359 residues long: Pyruvate dehydrogenase E1 component subunit beta, mitochondrial (359 aa).

Residues 1-30 constitute a mitochondrion transit peptide; that stretch reads MAVVAGLVRGPLRQASGLLKRRFHRSAPAA. Tyr-67 carries the phosphotyrosine modification. Glu-89 contributes to the thiamine diphosphate binding site. K(+)-binding residues include Ile-142, Ala-190, Ile-191, Asp-193, and Asn-195. N6-acetyllysine is present on Lys-354.

In terms of assembly, heterotetramer of two PDHA1 and two PDHB subunits. The heterotetramer interacts with DLAT, and is part of the multimeric pyruvate dehydrogenase complex that contains multiple copies of pyruvate dehydrogenase (E1), dihydrolipoamide acetyltransferase (DLAT, E2) and lipoamide dehydrogenase (DLD, E3). These subunits are bound to an inner core composed of about 48 DLAT and 12 PDHX molecules. Interacts with DLAT. The cofactor is thiamine diphosphate.

It localises to the mitochondrion matrix. It catalyses the reaction N(6)-[(R)-lipoyl]-L-lysyl-[protein] + pyruvate + H(+) = N(6)-[(R)-S(8)-acetyldihydrolipoyl]-L-lysyl-[protein] + CO2. Its function is as follows. The pyruvate dehydrogenase complex catalyzes the overall conversion of pyruvate to acetyl-CoA and CO(2), and thereby links the glycolytic pathway to the tricarboxylic cycle. In Mus musculus (Mouse), this protein is Pyruvate dehydrogenase E1 component subunit beta, mitochondrial (Pdhb).